The following is a 772-amino-acid chain: Polyribonucleotide nucleotidyltransferase (772 aa).

Mg(2+) contacts are provided by Asp-488 and Asp-494. A KH domain is found at 555-614 (PRLTTLKINPEKIRDVIGKGGAVIRGLQEETGTTINIDEDGTITIASTDPEKAEFAKKRI). An S1 motif domain is found at 624–692 (GKVYEGPVTK…EKGRVKLSMK (69 aa)). The segment at 690–772 (SMKALTERPA…QPYAPRDSQE (83 aa)) is disordered. Residues 703 to 740 (YSERPPREDRGDRGDRGGERRERSDRGDRGGDRGERAP) are compositionally biased toward basic and acidic residues. Residues 743-757 (NSEQQQQPRSNEQQP) show a composition bias toward low complexity.

Belongs to the polyribonucleotide nucleotidyltransferase family. Mg(2+) is required as a cofactor.

The protein resides in the cytoplasm. It catalyses the reaction RNA(n+1) + phosphate = RNA(n) + a ribonucleoside 5'-diphosphate. Involved in mRNA degradation. Catalyzes the phosphorolysis of single-stranded polyribonucleotides processively in the 3'- to 5'-direction. The chain is Polyribonucleotide nucleotidyltransferase from Variovorax paradoxus (strain S110).